Consider the following 94-residue polypeptide: MTKSELIERLVQKCHAVAAKDVENAVKEILDQMSFALESGKRIEVRGFGSFSLHYRQPRLGRNPKTGEQVKLDAKSVPHFKAGKELRERVDIYA.

It belongs to the bacterial histone-like protein family. In terms of assembly, heterodimer of an alpha and a beta chain.

This protein is one of the two subunits of integration host factor, a specific DNA-binding protein that functions in genetic recombination as well as in transcriptional and translational control. The polypeptide is Integration host factor subunit beta (ihfB) (Pasteurella multocida (strain Pm70)).